The following is a 428-amino-acid chain: MYQSPRRLCSALLLRDAPGLRRTLVPGPRRTLAPPVLGSRPASPQLQAAASGAARSRPRTVSPMGNGTSRLYSALAKTINSSAAAQHPEYLVSADPEHLEPIDPKELLEECRAVLHTRPPRYQRDFVDLRTDCSSSHPPIRVMQWNILAQALGEGKDNFVQCPVEALKWEERKCLILEEILAYQPDILCLQEVDHYFDTFQPLLSRLGYQGTFFPKPWSPCLDVEHNNGPDGCALFFLQSRFKLINSTNIRLTAMTLKTNQVAIAQTLECKESGRQFCIAVTHLKARTGWERFRSAQGCDLLQNLQNITEGAKIPLIVCGDFNAEPTEEVYKHFASSSLNLNSAYKLLSPDGQSEPPYTTWKIRTSGECRHTLDYIWYSRHALSVTSALDLLTEEQIGPNRLPSFHYPSDHLSLVCDFSFNEEPDELL.

The N-terminal 72 residues, 1–72 (MYQSPRRLCS…PMGNGTSRLY (72 aa)), are a transit peptide targeting the mitochondrion. The tract at residues 21 to 66 (RRTLVPGPRRTLAPPVLGSRPASPQLQAAASGAARSRPRTVSPMGN) is disordered. Residues 39–55 (SRPASPQLQAAASGAAR) show a composition bias toward low complexity. A Mg(2+)-binding site is contributed by E192. Substrate contacts are provided by residues E192, 216-218 (KPW), N260, 283-286 (HLKA), and 321-323 (DFN). The segment at 340–350 (NLNSAYKLLSP) is interaction with PPARG. H411 contributes to the substrate binding site.

This sequence belongs to the CCR4/nocturin family. Interacts with PPARG. Mg(2+) is required as a cofactor.

The protein localises to the cytoplasm. It localises to the nucleus. The protein resides in the perinuclear region. It is found in the mitochondrion. The catalysed reaction is NADP(+) + H2O = phosphate + NAD(+). It carries out the reaction NADPH + H2O = phosphate + NADH. Functionally, phosphatase which catalyzes the conversion of NADP(+) to NAD(+) and of NADPH to NADH. Shows a small preference for NADPH over NADP(+). Represses translation and promotes degradation of target mRNA molecules. Plays an important role in post-transcriptional regulation of metabolic genes under circadian control. Exerts a rhythmic post-transcriptional control of genes necessary for metabolic functions including nutrient absorption, glucose/insulin sensitivity, lipid metabolism, adipogenesis, inflammation and osteogenesis. Plays an important role in favoring adipogenesis over osteoblastogenesis and acts as a key regulator of the adipogenesis/osteogenesis balance. Promotes adipogenesis by facilitating PPARG nuclear translocation which activates its transcriptional activity. Regulates circadian expression of NOS2 in the liver and negatively regulates the circadian expression of IGF1 in the bone. Critical for proper development of early embryos. In Rattus norvegicus (Rat), this protein is Nocturnin.